Here is a 193-residue protein sequence, read N- to C-terminus: uncharacterized protein (193 aa).

Residues 119-143 (LAGSLLAATGMTLGIFGMGITGTCW) traverse the membrane as a helical segment.

The protein resides in the mitochondrion membrane. This is an uncharacterized protein from Saccharomyces cerevisiae (strain ATCC 204508 / S288c) (Baker's yeast).